Consider the following 138-residue polypeptide: Large ribosomal subunit protein bL17 (138 aa).

Belongs to the bacterial ribosomal protein bL17 family. Part of the 50S ribosomal subunit. Contacts protein L32.

This is Large ribosomal subunit protein bL17 from Solidesulfovibrio magneticus (strain ATCC 700980 / DSM 13731 / RS-1) (Desulfovibrio magneticus).